The following is a 93-amino-acid chain: YcgL domain-containing protein VSAL_I1068 (93 aa).

The YcgL domain occupies 1-84 (MYCSIYKSSK…PPENLLEKYK (84 aa)).

The chain is YcgL domain-containing protein VSAL_I1068 from Aliivibrio salmonicida (strain LFI1238) (Vibrio salmonicida (strain LFI1238)).